The following is a 122-amino-acid chain: S-adenosylmethionine decarboxylase proenzyme (122 aa).

The Schiff-base intermediate with substrate; via pyruvic acid role is filled by Ser63. A Pyruvic acid (Ser); by autocatalysis modification is found at Ser63. The active-site Proton acceptor; for processing activity is His68. Cys83 functions as the Proton donor; for catalytic activity in the catalytic mechanism.

The protein belongs to the prokaryotic AdoMetDC family. Type 1 subfamily. As to quaternary structure, heterotetramer of two alpha and two beta chains arranged as a dimer of alpha/beta heterodimers. Pyruvate serves as cofactor. Is synthesized initially as an inactive proenzyme. Formation of the active enzyme involves a self-maturation process in which the active site pyruvoyl group is generated from an internal serine residue via an autocatalytic post-translational modification. Two non-identical subunits are generated from the proenzyme in this reaction, and the pyruvate is formed at the N-terminus of the alpha chain, which is derived from the carboxyl end of the proenzyme. The post-translation cleavage follows an unusual pathway, termed non-hydrolytic serinolysis, in which the side chain hydroxyl group of the serine supplies its oxygen atom to form the C-terminus of the beta chain, while the remainder of the serine residue undergoes an oxidative deamination to produce ammonia and the pyruvoyl group blocking the N-terminus of the alpha chain.

It catalyses the reaction S-adenosyl-L-methionine + H(+) = S-adenosyl 3-(methylsulfanyl)propylamine + CO2. It functions in the pathway amine and polyamine biosynthesis; S-adenosylmethioninamine biosynthesis; S-adenosylmethioninamine from S-adenosyl-L-methionine: step 1/1. In terms of biological role, catalyzes the decarboxylation of S-adenosylmethionine to S-adenosylmethioninamine (dcAdoMet), the propylamine donor required for the synthesis of the polyamines spermine and spermidine from the diamine putrescine. This Methanococcus maripaludis (strain DSM 14266 / JCM 13030 / NBRC 101832 / S2 / LL) protein is S-adenosylmethionine decarboxylase proenzyme.